The sequence spans 501 residues: L-arabinose isomerase (501 aa).

Mn(2+) is bound by residues glutamate 306, glutamate 333, histidine 350, and histidine 450.

The protein belongs to the arabinose isomerase family. As to quaternary structure, homohexamer. It depends on Mn(2+) as a cofactor.

The catalysed reaction is beta-L-arabinopyranose = L-ribulose. The protein operates within carbohydrate degradation; L-arabinose degradation via L-ribulose; D-xylulose 5-phosphate from L-arabinose (bacterial route): step 1/3. In terms of biological role, catalyzes the conversion of L-arabinose to L-ribulose. The chain is L-arabinose isomerase from Erwinia tasmaniensis (strain DSM 17950 / CFBP 7177 / CIP 109463 / NCPPB 4357 / Et1/99).